We begin with the raw amino-acid sequence, 465 residues long: E3 ubiquitin-protein ligase TRIM15 (465 aa).

Residues 16–61 (CTLCVGPLEDAVTAPCGHTFCRLCLPTLSQMGAQSSGKILLCPLCQ) form an RING-type zinc finger. The B box-type zinc-finger motif lies at 78–119 (LGETYCEEHGEKIYFFCENDAEFLCVFCREGPTHQAHTVGFL). Residues Cys-83, His-86, Cys-105, and His-111 each contribute to the Zn(2+) site. Residues 126–229 (YRDRLRSRLE…VKELEEKCQQ (104 aa)) adopt a coiled-coil conformation. A B30.2/SPRY domain is found at 276-465 (EMMRMFSENL…KKGSCLTLKG (190 aa)).

The protein belongs to the TRIM/RBCC family. As to quaternary structure, interacts with paxillin/PXN; this interaction recruits TRIM15 to focal adhesions. Interacts with TRIM8; this interaction prevents TRIM8 cytoplasmic translocation.

The protein localises to the cytoplasm. The protein resides in the nucleus. Its subcellular location is the cell junction. It is found in the focal adhesion. The catalysed reaction is S-ubiquitinyl-[E2 ubiquitin-conjugating enzyme]-L-cysteine + [acceptor protein]-L-lysine = [E2 ubiquitin-conjugating enzyme]-L-cysteine + N(6)-ubiquitinyl-[acceptor protein]-L-lysine.. Functionally, E3 ubiquitin ligase that plays a role in several processes including innate antiviral immnity, cell migration and chemotaxis. Acts as a 'Lys-63'-specific ubiquitin ligase for MAPK1/ERK2 and MAPK3/ERK1, promoting their activation by facilitating their interaction with MAP2K1 and MAP2K2. Also plays a role in cell migration and chemotaxis by acting as a stable focal adhesion component upon recruitment by multi-adapter protein paxillin/PXN. Functions in the RIGI-mediated interferon induction pathway upstream or at the level of MAVS. Inhibits NF-kappa-B activation by turnover of 'Lys-63'-linked ubiquitination of MAP3K7/TAK1. Mechanistically, prevents TRIM8 cytoplasmic translocation and thus inhibits TRIM8-mediated 'Lys-63'-linked polyubiquitination of MAP3K7/TAK1 in the cytoplasm. Also has an important regulatory effect on the activation of hepatic stellate cells (HSCs). This is E3 ubiquitin-protein ligase TRIM15 (TRIM15) from Macaca mulatta (Rhesus macaque).